The sequence spans 287 residues: DegV domain-containing protein DR_0500 (287 aa).

The region spanning 7–280 (FAVVTDGGLD…PRALGVAAAP (274 aa)) is the DegV domain. Hexadecanoate is bound by residues Ser-62 and Ser-93.

Functionally, may bind long-chain fatty acids, such as palmitate, and may play a role in lipid transport or fatty acid metabolism. This chain is DegV domain-containing protein DR_0500, found in Deinococcus radiodurans (strain ATCC 13939 / DSM 20539 / JCM 16871 / CCUG 27074 / LMG 4051 / NBRC 15346 / NCIMB 9279 / VKM B-1422 / R1).